A 103-amino-acid polypeptide reads, in one-letter code: Pro-corazonin (103 aa).

The N-terminal stretch at 1–19 (MSANVTLLLIFVTLASVTA) is a signal peptide. Q20 carries the pyrrolidone carboxylic acid modification. Residue N30 is modified to Asparagine amide. Positions 34–103 (DQGHLRPELK…NLNAMMDAFY (70 aa)) are excised as a propeptide.

Expressed in corpora cardiaca (CC), corpora allata (CA), antennal lobe (AL) and gnathal ganglion (GNG) (at protein level). Expression in CC and CA detected in all animals, expression in AL and in GNG in some animals.

The protein localises to the secreted. In terms of biological role, cardioactive peptide. Corazonin is probably involved in the physiological regulation of the heart beat. The sequence is that of Pro-corazonin from Agrotis ipsilon (Black cutworm moth).